The primary structure comprises 678 residues: RxLR effector protein PITG_16705 (678 aa).

Residues 1-20 (MHLFFLTAVAFVITSVSVDA) form the signal peptide. The short motif at 46-61 (RLLRKNSTVDLVGEER) is the RxLR-dEER element.

It belongs to the RxLR effector family.

It localises to the secreted. It is found in the host cytoplasm. Functionally, effector that enhances P.infestans colonization of Nicotiana benthamiana leaves. The chain is RxLR effector protein PITG_16705 from Phytophthora infestans (strain T30-4) (Potato late blight agent).